Here is a 229-residue protein sequence, read N- to C-terminus: Probable calcium-binding protein CML22 (229 aa).

EF-hand domains follow at residues 53–88, 89–124, 145–180, and 184–219; these read EGLR…LKLS, LSDE…IYLL, SIFD…EDYP, and SPSH…WVGL. Aspartate 66, aspartate 68, asparagine 70, threonine 72, and glutamate 77 together coordinate Ca(2+).

Functionally, potential calcium sensor. This is Probable calcium-binding protein CML22 (CML22) from Arabidopsis thaliana (Mouse-ear cress).